The chain runs to 443 residues: Glutamate--tRNA ligase 2 (443 aa).

The 'HIGH' region signature appears at 7-17 (PSPTGLIHVGN). Residues 240 to 244 (KLSKR) carry the 'KMSKS' region motif. Residue K243 coordinates ATP.

This sequence belongs to the class-I aminoacyl-tRNA synthetase family. Glutamate--tRNA ligase type 1 subfamily. In terms of assembly, monomer.

The protein localises to the cytoplasm. The enzyme catalyses tRNA(Glu) + L-glutamate + ATP = L-glutamyl-tRNA(Glu) + AMP + diphosphate. In terms of biological role, catalyzes the attachment of glutamate to tRNA(Glu) in a two-step reaction: glutamate is first activated by ATP to form Glu-AMP and then transferred to the acceptor end of tRNA(Glu). The chain is Glutamate--tRNA ligase 2 from Gluconacetobacter diazotrophicus (strain ATCC 49037 / DSM 5601 / CCUG 37298 / CIP 103539 / LMG 7603 / PAl5).